A 372-amino-acid chain; its full sequence is G patch domain and ankyrin repeat-containing protein 1 (372 aa).

The interval 74 to 110 is disordered; that stretch reads DSSSSKPQRAEPMRERKKKRRRVTREPAAAGVPRQGR. 2 ANK repeats span residues 124–155 and 156–186; these read LAAQ…ARDA and FWWT…WVGV. 2 disordered regions span residues 211–233 and 251–271; these read RESH…SSQF and AHLL…GVPT. Positions 220 to 233 are enriched in polar residues; it reads PENQNRSTPSSSQF. In terms of domain architecture, G-patch spans 271–317; sequence TSSPGFRLLLRGGWEPGMGLGPRGEGRANPIPTILKRDQEGLGYRSP. Lys-306 is covalently cross-linked (Glycyl lysine isopeptide (Lys-Gly) (interchain with G-Cter in SUMO2)). 2 stretches are compositionally biased toward basic and acidic residues: residues 330-340 and 348-357; these read TRAVSGRERVP and RENRRQEEKG. A disordered region spans residues 330 to 357; it reads TRAVSGRERVPRVATLSQRENRRQEEKG.

This Mus musculus (Mouse) protein is G patch domain and ankyrin repeat-containing protein 1 (Gpank1).